Reading from the N-terminus, the 458-residue chain is V-type ATP synthase beta chain (458 aa).

Belongs to the ATPase alpha/beta chains family.

In terms of biological role, produces ATP from ADP in the presence of a proton gradient across the membrane. The V-type beta chain is a regulatory subunit. This Enterococcus faecalis (strain ATCC 700802 / V583) protein is V-type ATP synthase beta chain.